The following is a 501-amino-acid chain: Sucrose transport protein SUT2 (501 aa).

The Cytoplasmic portion of the chain corresponds to 1–31 (MPRRPSGGGGGAGPAAAAVRKVPLRKLLRAA). Residues 32-52 (SVACGVQFGWALQLSLLTPYV) traverse the membrane as a helical segment. The Extracellular portion of the chain corresponds to 53–55 (QEL). A helical transmembrane segment spans residues 56-76 (GIPHAFASLVWLCGPLSGLLV). The Cytoplasmic portion of the chain corresponds to 77–98 (QPLVGHLSDRIAPAASPLGRRR). A helical membrane pass occupies residues 99–119 (PFIAAGAASIAAAVLTVGFSA). Residues 120-135 (DLGRIFGDSITPGSTR) lie on the Extracellular side of the membrane. The chain crosses the membrane as a helical span at residues 136–156 (LGAIIVYLVGFWLLDVGNNAT). Topologically, residues 157-176 (QGPCRAFLADLTENDPRRTR) are cytoplasmic. The helical transmembrane segment at 177-197 (IANAYFSLFMALGNILGYATG) threads the bilayer. Topologically, residues 198–222 (AYSGWYKIFPFTVTPSCSISCANLK) are extracellular. Residues 223–243 (SAFLLDIIILVVTTCITVASV) form a helical membrane-spanning segment. Topologically, residues 244-278 (QEPQSFGSDEADHPSTEQEAFLWELFGSFRYFTLP) are cytoplasmic. Residues 279 to 299 (VWMVLIVTALTWIGWFPFILF) traverse the membrane as a helical segment. The Extracellular segment spans residues 300 to 327 (DTDWMGREIYRGSPDDPSITQSYHDGVR). A helical membrane pass occupies residues 328–348 (MGSFGLMLNSVLLGFTSIVLE). At 349 to 356 (KLCRKWGA) the chain is on the cytoplasmic side. A helical membrane pass occupies residues 357–377 (GLVWGVSNILMALCFVAMLVI). Residues 378-394 (TYVAKNMDYPPSGVPPT) lie on the Extracellular side of the membrane. Residues 395-415 (GIVIASLVVFTILGAPLAITY) form a helical membrane-spanning segment. At 416–433 (SIPYAMAASRVENLGLGQ) the chain is on the cytoplasmic side. A helical membrane pass occupies residues 434-454 (GLAMGILNLAIVIPQVIVSLG). Topologically, residues 455-467 (SGPWDQLFGGGNA) are extracellular. The chain crosses the membrane as a helical span at residues 468–488 (PAFAVAAAASFIGGLVAILGL). The Cytoplasmic segment spans residues 489–501 (PRARIASRRRGHR).

This sequence belongs to the glycoside-pentoside-hexuronide (GPH) cation symporter transporter (TC 2.A.2.4) family. In terms of assembly, homodimer. Widely expressed.

It is found in the cell membrane. Its pathway is glycan biosynthesis; sucrose metabolism. Functionally, responsible for the transport of sucrose into the cell, with the concomitant uptake of protons (symport system). May also transport other glucosides. The sequence is that of Sucrose transport protein SUT2 (SUT2) from Oryza sativa subsp. japonica (Rice).